The sequence spans 142 residues: Large ribosomal subunit protein uL11 (142 aa).

Belongs to the universal ribosomal protein uL11 family. In terms of assembly, part of the ribosomal stalk of the 50S ribosomal subunit. Interacts with L10 and the large rRNA to form the base of the stalk. L10 forms an elongated spine to which L12 dimers bind in a sequential fashion forming a multimeric L10(L12)X complex. One or more lysine residues are methylated.

In terms of biological role, forms part of the ribosomal stalk which helps the ribosome interact with GTP-bound translation factors. This is Large ribosomal subunit protein uL11 from Erwinia tasmaniensis (strain DSM 17950 / CFBP 7177 / CIP 109463 / NCPPB 4357 / Et1/99).